Reading from the N-terminus, the 378-residue chain is Erythronate-4-phosphate dehydrogenase (378 aa).

Residues S45 and T66 each coordinate substrate. D146 and T175 together coordinate NAD(+). Residue R208 is part of the active site. NAD(+) is bound at residue D232. E237 is a catalytic residue. H254 serves as the catalytic Proton donor. G257 lines the NAD(+) pocket. Y258 is a binding site for substrate.

It belongs to the D-isomer specific 2-hydroxyacid dehydrogenase family. PdxB subfamily. As to quaternary structure, homodimer.

The protein localises to the cytoplasm. The catalysed reaction is 4-phospho-D-erythronate + NAD(+) = (R)-3-hydroxy-2-oxo-4-phosphooxybutanoate + NADH + H(+). The protein operates within cofactor biosynthesis; pyridoxine 5'-phosphate biosynthesis; pyridoxine 5'-phosphate from D-erythrose 4-phosphate: step 2/5. Catalyzes the oxidation of erythronate-4-phosphate to 3-hydroxy-2-oxo-4-phosphonooxybutanoate. This Escherichia coli O7:K1 (strain IAI39 / ExPEC) protein is Erythronate-4-phosphate dehydrogenase.